Consider the following 514-residue polypeptide: Peptide chain release factor 3 (514 aa).

The tr-type G domain occupies 8-268 (KKRRTFAIIS…TFLKFAPEPH (261 aa)). GTP is bound by residues 17–24 (SHPDAGKT), 85–89 (DTPGH), and 139–142 (NKLD).

The protein belongs to the TRAFAC class translation factor GTPase superfamily. Classic translation factor GTPase family. PrfC subfamily.

It localises to the cytoplasm. Functionally, increases the formation of ribosomal termination complexes and stimulates activities of RF-1 and RF-2. It binds guanine nucleotides and has strong preference for UGA stop codons. It may interact directly with the ribosome. The stimulation of RF-1 and RF-2 is significantly reduced by GTP and GDP, but not by GMP. The sequence is that of Peptide chain release factor 3 from Streptococcus thermophilus (strain ATCC BAA-491 / LMD-9).